Reading from the N-terminus, the 530-residue chain is MKSIIFNEIKKILECDFALENPKDKNLAHFATPLAFSLAKELKKSPMLIASDLASKFQNHDCFESVEAVNGYLNFRISKTFLNELANQALTNPNDFTKGEKKQESFLLEYVSANPTGPLHIGHARGAVFGDTLTRLARHLGYKFNTEYYVNDAGNQIYLLGLSILLSVKESILHENVEYPEQYYKGEYIVDLAKEAFEKFGKEFFSEENIPSLADWAKDKMLVLIKQNLEQAKIKIDSYVSERSYYDALNATLESLKEHKGIYEQEGKIWLASSQKGDEKDRVIIREDGRGTYLAADIVYHKDKMSRGYGKCINIWGADHHGYIPRMKAAMEFLGFDSNNLEIILAQMVSLLKDGEPYKMSKRAGNFILMSDVVDEIGSDALRYIFLSKKCDTHLEFDISDLQKEDSSNPVYYINYAHARIHQVFAKAGKKIDDVMKADLQSLNQDGVNLLFEALNLKAVLNDAFEARALQKIPDYLKNLAANFHKFYNENKVVGSANENDLLKLFSLVALSIKTAFSLMGIEAKNKMEH.

Positions 113 to 123 match the 'HIGH' region motif; sequence ANPTGPLHIGH.

It belongs to the class-I aminoacyl-tRNA synthetase family. Monomer.

It is found in the cytoplasm. The catalysed reaction is tRNA(Arg) + L-arginine + ATP = L-arginyl-tRNA(Arg) + AMP + diphosphate. This Campylobacter jejuni subsp. jejuni serotype O:2 (strain ATCC 700819 / NCTC 11168) protein is Arginine--tRNA ligase.